The sequence spans 111 residues: BET1-like protein (111 aa).

The Cytoplasmic segment spans residues 1–86 (MADWARAQSP…MARSGRDNRK (86 aa)). Phosphoserine occurs at positions 9 and 37. One can recognise a t-SNARE coiled-coil homology domain in the interval 15–77 (EILDRENKRM…TGSVKRFSTM (63 aa)). Residues 87 to 107 (LLCGMAVGLIVAFFILSYFLS) form a helical; Anchor for type IV membrane protein membrane-spanning segment. The Lumenal portion of the chain corresponds to 108–111 (RART).

In terms of assembly, component of a SNARE complex consisting of STX5, YKT6, GOSR1 and BET1L. Interacts with STX5.

The protein resides in the golgi apparatus membrane. Its subcellular location is the golgi apparatus. It localises to the trans-Golgi network membrane. In terms of biological role, vesicle SNARE required for targeting and fusion of retrograde transport vesicles with the Golgi complex. Required for the integrity of the Golgi complex. The polypeptide is BET1-like protein (Pongo abelii (Sumatran orangutan)).